A 140-amino-acid polypeptide reads, in one-letter code: Mite allergen Der p 21.0101 (140 aa).

Positions 1 to 19 (MKFIITLFAAIVMAAAVSG) are cleaved as a signal peptide. Immunodominant conformational IgE-binding epitope stretches follow at residues 20 to 53 (FIVGDKKEDEWRMAFDRLMMEELETKIDQVEKGL) and 108 to 140 (YNYEFALESIKLLIKKLDELAKKVKAVNPDEYY).

Belongs to the mite group 5 allergen family. As to quaternary structure, monomer. Homodimer. As to expression, expressed in the epithelium, lumen and microvilli of the midgut, and in feces.

The protein localises to the cytoplasm. It is found in the endoplasmic reticulum. Its subcellular location is the vesicle. It localises to the secreted. In Dermatophagoides pteronyssinus (European house dust mite), this protein is Mite allergen Der p 21.0101.